The primary structure comprises 146 residues: MDQTLTQFGSVFVFLLLGVIFVVGGYLTSRLLRPSRPNPQKNSTYECGEEAIGSAWVKFNIRFYVVALIFIIFDVEVVFLYPWATVFKPLGTFALIEVLVFAGILILGLAYAWVKGDLDWVRPTPNIPKMPPMPELPVAKGASQKD.

A run of 3 helical transmembrane segments spans residues 8–28 (FGSVFVFLLLGVIFVVGGYLT), 63–83 (FYVVALIFIIFDVEVVFLYPW), and 93–113 (FALIEVLVFAGILILGLAYAW).

Belongs to the complex I subunit 3 family. NDH-1 is composed of 14 different subunits. Subunits NuoA, H, J, K, L, M, N constitute the membrane sector of the complex.

The protein resides in the cell inner membrane. It catalyses the reaction a quinone + NADH + 5 H(+)(in) = a quinol + NAD(+) + 4 H(+)(out). In terms of biological role, NDH-1 shuttles electrons from NADH, via FMN and iron-sulfur (Fe-S) centers, to quinones in the respiratory chain. The immediate electron acceptor for the enzyme in this species is believed to be a menaquinone. Couples the redox reaction to proton translocation (for every two electrons transferred, four hydrogen ions are translocated across the cytoplasmic membrane), and thus conserves the redox energy in a proton gradient. This Chlorobium chlorochromatii (strain CaD3) protein is NADH-quinone oxidoreductase subunit A.